Reading from the N-terminus, the 58-residue chain is Small ribosomal subunit protein bS21 (58 aa).

Residues Lys-34 to Lys-58 are disordered. Over residues Val-43–Lys-58 the composition is skewed to basic residues.

This sequence belongs to the bacterial ribosomal protein bS21 family.

In Clostridium acetobutylicum (strain ATCC 824 / DSM 792 / JCM 1419 / IAM 19013 / LMG 5710 / NBRC 13948 / NRRL B-527 / VKM B-1787 / 2291 / W), this protein is Small ribosomal subunit protein bS21.